Here is a 232-residue protein sequence, read N- to C-terminus: MTNITHDFAVVGTDTGVGKTVVTAGLVGWLRNAGHDAQAVKPAQTGYPPDDDAEFVATACGTDAAATCGPRLEPALAPEIAADVADERIDYTAIFETCAAALDRDGPGVIEGIGGLRVPLADGKEVVDLVSELDVPTILVARSGLGTLNHTALSVEALRRRDVFVSGIVLNQFEGETAAERTNPRVLEEMTGCPVYTMPPLSIAKPEDAVAGVCEHLPVEQVLSSVERDPIE.

16 to 21 (GVGKTV) provides a ligand contact to ATP. T20 provides a ligand contact to Mg(2+). Residue K41 is part of the active site. Substrate is bound at residue T45. Residues D52, 111–114 (EGIG), 171–172 (NQ), 200–202 (PLS), and E207 contribute to the ATP site. Mg(2+) is bound by residues D52 and E111.

This sequence belongs to the dethiobiotin synthetase family. In terms of assembly, homodimer. Requires Mg(2+) as cofactor.

The protein localises to the cytoplasm. The enzyme catalyses (7R,8S)-7,8-diammoniononanoate + CO2 + ATP = (4R,5S)-dethiobiotin + ADP + phosphate + 3 H(+). It catalyses the reaction (7R,8S)-8-amino-7-(carboxyamino)nonanoate + ATP = (4R,5S)-dethiobiotin + ADP + phosphate + H(+). The protein operates within cofactor biosynthesis; biotin biosynthesis; biotin from 7,8-diaminononanoate: step 1/2. Catalyzes a mechanistically unusual reaction, the ATP-dependent insertion of CO2 between the N7 and N8 nitrogen atoms of 7,8-diaminopelargonic acid (DAPA, also called 7,8-diammoniononanoate) to form a ureido ring. This archaea does not encode bioA (which catalyzes the formation of the precursor for this reaction in the cannonical pathway), instead it encodes bioU, which replaces bioA and also performs the first half of the cannonical BioD reaction. Thus in this archaea BioD has a different substrate. This Haloferax mediterranei (strain ATCC 33500 / DSM 1411 / JCM 8866 / NBRC 14739 / NCIMB 2177 / R-4) (Halobacterium mediterranei) protein is ATP-dependent dethiobiotin synthetase BioD.